The following is a 512-amino-acid chain: Alpha-amylase (512 aa).

The N-terminal stretch at 1–29 (MKQQKRLYARLLTLLFALIFLLPHSAAAA) is a signal peptide. 8 residues coordinate Ca(2+): asparagine 133, aspartate 190, alanine 210, aspartate 212, aspartate 223, aspartate 229, aspartate 231, and aspartate 233. Na(+) is bound at residue aspartate 190. The Na(+) site is built by aspartate 212, aspartate 223, and aspartate 229. The Nucleophile role is filled by aspartate 260. Histidine 264 lines the Ca(2+) pocket. The active-site Proton donor is glutamate 290. Glycine 329, tyrosine 331, histidine 435, aspartate 436, and aspartate 459 together coordinate Ca(2+).

It belongs to the glycosyl hydrolase 13 family. In terms of assembly, monomer. The cofactor is Ca(2+). Requires Na(+) as cofactor.

The protein resides in the secreted. It carries out the reaction Endohydrolysis of (1-&gt;4)-alpha-D-glucosidic linkages in polysaccharides containing three or more (1-&gt;4)-alpha-linked D-glucose units.. This is Alpha-amylase (amyS) from Bacillus licheniformis.